Consider the following 86-residue polypeptide: Cell division topological specificity factor (86 aa).

It belongs to the MinE family.

Functionally, prevents the cell division inhibition by proteins MinC and MinD at internal division sites while permitting inhibition at polar sites. This ensures cell division at the proper site by restricting the formation of a division septum at the midpoint of the long axis of the cell. The sequence is that of Cell division topological specificity factor from Photobacterium profundum (strain SS9).